Reading from the N-terminus, the 935-residue chain is Progesterone receptor (935 aa).

The tract at residues 1 to 49 (MTELKAKGXRAPHVAGSPSSPKVXSPLPCRQAAXPFPGSQTSDTLPEVS) is disordered. The interval 1–164 (MTELKAKGXR…SATQRVLSRL (164 aa)) is AF3; mediates transcriptional activation. The modulating, Pro-Rich stretch occupies residues 1–568 (MTELKAKGXR…YSFESLPQKI (568 aa)). A compositionally biased stretch (low complexity) spans 17–28 (SPSSPKVXSPLP). A Phosphoserine modification is found at Ser20. The LXXL motif 1 signature appears at 55–59 (LDGLL). The disordered stretch occupies residues 61-255 (PRICQGQDPP…GAAAGGGAAA (195 aa)). Ser81 carries the phosphoserine modification. The LXXL motif 2 signature appears at 115–119 (LDTLW). Phosphoserine is present on residues Ser130 and Ser162. The interval 165 to 305 (MSRSGGKAGD…LATTVTDFIH (141 aa)) is mediates transcriptional transrepression. Residues 183-187 (KVLPR) carry the Nuclear localization signal motif. Residue Ser190 is modified to Phosphoserine. Positions 191–203 (PSRQLLLPTTGSP) are enriched in polar residues. Ser213 bears the Phosphoserine mark. The span at 220 to 231 (EVEEEDGSESED) shows a compositional bias: acidic residues. Residues 232-246 (SAGPLLKGKPRALGG) show a composition bias toward low complexity. Phosphoserine; by MAPK1 is present on Ser294. The interval 331 to 365 (GGAGAASAFAPPRSSPSASSTPVPGGDFPDCAYAP) is disordered. Over residues 335 to 356 (AASAFAPPRSSPSASSTPVPGG) the composition is skewed to low complexity. Ser345 is modified (phosphoserine; by MAPK). Lys388 is covalently cross-linked (Glycyl lysine isopeptide (Lys-Gly) (interchain with G-Cter in SUMO); alternate). A Glycyl lysine isopeptide (Lys-Gly) (interchain with G-Cter in ubiquitin); alternate cross-link involves residue Lys388. Position 400 is a phosphoserine; by CDK2 (Ser400). The segment at 415 to 452 (PDFPLGPPPPLPPRAPPSRPGEAAVTAAPASASVSSAS) is disordered. Residues 418 to 433 (PLGPPPPLPPRAPPSR) are compositionally biased toward pro residues. Residues 434–452 (PGEAAVTAAPASASVSSAS) show a composition bias toward low complexity. An AF1; mediates transcriptional activation region spans residues 456–548 (STLECILYKA…VYPPYLNYLR (93 aa)). Lys533 participates in a covalent cross-link: Glycyl lysine isopeptide (Lys-Gly) (interchain with G-Cter in SUMO). NR C4-type zinc fingers lie at residues 569–589 (CLIC…CGSC) and 605–629 (CAGR…LRKC). The segment at residues 569-641 (CLICGDEASG…AGMVLGGRKF (73 aa)) is a DNA-binding region (nuclear receptor). At Ser678 the chain carries Phosphoserine. The NR LBD domain occupies 681–915 (QDIQLIPPLI…EFPEMMSEVI (235 aa)). The interval 689 to 935 (LINLLLSIEP…MVKPLLFHKK (247 aa)) is AF2; mediates transcriptional activation.

The protein belongs to the nuclear hormone receptor family. In terms of assembly, interacts with SMARD1 and UNC45A. Interacts with CUEDC2; the interaction promotes ubiquitination, decreases sumoylation, and represses transcriptional activity. Interacts with PIAS3; the interaction promotes sumoylation of PR in a hormone-dependent manner, inhibits DNA-binding, and alters nuclear export. Interacts with SP1; the interaction requires ligand-induced phosphorylation on Ser-345 by ERK1/2-MAPK. Interacts with PRMT2. Interacts with NCOA2 and NCOA1. Interacts with KLF9. Interacts with GTF2B. Phosphorylated on multiple serine sites. Several of these sites are hormone-dependent. Phosphorylation on Ser-294 is highly hormone-dependent and modulates ubiquitination and sumoylation on Lys-388. Phosphorylation on Ser-345 also requires induction by hormone. Basal phosphorylation on Ser-81, Ser-162, Ser-190 and Ser-400 is increased in response to progesterone and can be phosphorylated in vitro by the CDK2-A1 complex. Increased levels of phosphorylation on Ser-400 also in the presence of EGF, heregulin, IGF, PMA and FBS. Phosphorylation at this site by CDK2 is ligand-independent, and increases nuclear translocation and transcriptional activity. Phosphorylation at Ser-162 and Ser-294, but not at Ser-190, is impaired during the G(2)/M phase of the cell cycle. Phosphorylation on Ser-345 by ERK1/2 MAPK is required for interaction with SP1. In terms of processing, sumoylation is hormone-dependent and represses transcriptional activity. Sumoylation on all three sites is enhanced by PIAS3. Desumoylated by SENP1. Sumoylation on Lys-388, the main site of sumoylation, is repressed by ubiquitination on the same site, and modulated by phosphorylation at Ser-294. Post-translationally, ubiquitination is hormone-dependent and represses sumoylation on the same site. Promoted by MAPK-mediated phosphorylation on Ser-294. Palmitoylated by ZDHHC7 and ZDHHC21. Palmitoylation is required for plasma membrane targeting and for rapid intracellular signaling via ERK and AKT kinases and cAMP generation.

The protein localises to the nucleus. The protein resides in the cytoplasm. Its function is as follows. The steroid hormones and their receptors are involved in the regulation of eukaryotic gene expression and affect cellular proliferation and differentiation in target tissues. Transcriptional activator of several progesteron-dependent promoters in a variety of cell types. Involved in activation of SRC-dependent MAPK signaling on hormone stimulation. This chain is Progesterone receptor (PGR), found in Ateles paniscus (Black spider monkey).